The primary structure comprises 296 residues: Cytidine deaminase (296 aa).

CMP/dCMP-type deaminase domains lie at 52-167 (SPVE…YLPD) and 191-296 (QGHD…YISL). A substrate-binding site is contributed by 93–95 (NQE). H106 is a Zn(2+) binding site. E108 acts as the Proton donor in catalysis. The Zn(2+) site is built by C133 and C136.

Belongs to the cytidine and deoxycytidylate deaminase family. Homodimer. The cofactor is Zn(2+).

The enzyme catalyses cytidine + H2O + H(+) = uridine + NH4(+). The catalysed reaction is 2'-deoxycytidine + H2O + H(+) = 2'-deoxyuridine + NH4(+). Its function is as follows. This enzyme scavenges exogenous and endogenous cytidine and 2'-deoxycytidine for UMP synthesis. The polypeptide is Cytidine deaminase (Mannheimia succiniciproducens (strain KCTC 0769BP / MBEL55E)).